The following is a 427-amino-acid chain: 3-phosphoshikimate 1-carboxyvinyltransferase (427 aa).

3-phosphoshikimate is bound by residues lysine 22, serine 23, and arginine 27. Lysine 22 is a binding site for phosphoenolpyruvate. Positions 96 and 124 each coordinate phosphoenolpyruvate. Positions 169, 170, 171, 197, 313, 336, and 340 each coordinate 3-phosphoshikimate. A phosphoenolpyruvate-binding site is contributed by glutamine 171. Catalysis depends on aspartate 313, which acts as the Proton acceptor. Arginine 344, arginine 386, and lysine 411 together coordinate phosphoenolpyruvate.

Belongs to the EPSP synthase family. In terms of assembly, monomer.

The protein resides in the cytoplasm. The enzyme catalyses 3-phosphoshikimate + phosphoenolpyruvate = 5-O-(1-carboxyvinyl)-3-phosphoshikimate + phosphate. It functions in the pathway metabolic intermediate biosynthesis; chorismate biosynthesis; chorismate from D-erythrose 4-phosphate and phosphoenolpyruvate: step 6/7. Functionally, catalyzes the transfer of the enolpyruvyl moiety of phosphoenolpyruvate (PEP) to the 5-hydroxyl of shikimate-3-phosphate (S3P) to produce enolpyruvyl shikimate-3-phosphate and inorganic phosphate. The protein is 3-phosphoshikimate 1-carboxyvinyltransferase of Shigella dysenteriae.